The sequence spans 160 residues: Small ribosomal subunit protein uS17m (160 aa).

The protein belongs to the universal ribosomal protein uS17 family. In terms of assembly, component of the mitochondrial ribosome small subunit (28S) which comprises a 12S rRNA and about 30 distinct proteins.

The protein resides in the mitochondrion. This is Small ribosomal subunit protein uS17m (mrps-17) from Caenorhabditis elegans.